The primary structure comprises 101 residues: Small ribosomal subunit protein uS14 (101 aa).

The protein belongs to the universal ribosomal protein uS14 family. In terms of assembly, part of the 30S ribosomal subunit. Contacts proteins S3 and S10.

Functionally, binds 16S rRNA, required for the assembly of 30S particles and may also be responsible for determining the conformation of the 16S rRNA at the A site. In Caulobacter sp. (strain K31), this protein is Small ribosomal subunit protein uS14.